A 530-amino-acid polypeptide reads, in one-letter code: Ubiquitin carboxyl-terminal hydrolase 17-like protein 1 (530 aa).

Residues 80–375 (AGLQNMGNTC…QAYVLFYIQK (296 aa)) form the USP domain. Cysteine 89 functions as the Nucleophile in the catalytic mechanism. Residue histidine 334 is the Proton acceptor of the active site. Basic and acidic residues-rich tracts occupy residues 382–392 (SESVSRGREPR) and 398–411 (DTDR…LKRD). Residues 382–411 (SESVSRGREPRALGAEDTDRRAKQGELKRD) form a disordered region.

The protein belongs to the peptidase C19 family. USP17 subfamily.

It localises to the nucleus. Its subcellular location is the endoplasmic reticulum. It carries out the reaction Thiol-dependent hydrolysis of ester, thioester, amide, peptide and isopeptide bonds formed by the C-terminal Gly of ubiquitin (a 76-residue protein attached to proteins as an intracellular targeting signal).. In terms of biological role, deubiquitinating enzyme that removes conjugated ubiquitin from specific proteins to regulate different cellular processes that may include cell proliferation, progression through the cell cycle, apoptosis, cell migration, and the cellular response to viral infection. The sequence is that of Ubiquitin carboxyl-terminal hydrolase 17-like protein 1 (USP17L1) from Homo sapiens (Human).